Here is a 430-residue protein sequence, read N- to C-terminus: Adenylosuccinate synthetase (430 aa).

GTP-binding positions include 12-18 (GDEGKGK) and 40-42 (GHT). Asp13 serves as the catalytic Proton acceptor. Mg(2+) contacts are provided by Asp13 and Gly40. IMP contacts are provided by residues 13 to 16 (DEGK), 38 to 41 (NAGH), Thr130, Arg144, Gln224, Thr239, and Arg303. The Proton donor role is filled by His41. 299 to 305 (VNTGRKR) contributes to the substrate binding site. Residues Arg305, 331–333 (KLD), and 413–415 (STS) each bind GTP.

The protein belongs to the adenylosuccinate synthetase family. In terms of assembly, homodimer. Mg(2+) is required as a cofactor.

It is found in the cytoplasm. It carries out the reaction IMP + L-aspartate + GTP = N(6)-(1,2-dicarboxyethyl)-AMP + GDP + phosphate + 2 H(+). Its pathway is purine metabolism; AMP biosynthesis via de novo pathway; AMP from IMP: step 1/2. Its function is as follows. Plays an important role in the de novo pathway of purine nucleotide biosynthesis. Catalyzes the first committed step in the biosynthesis of AMP from IMP. This chain is Adenylosuccinate synthetase, found in Nitrobacter hamburgensis (strain DSM 10229 / NCIMB 13809 / X14).